The sequence spans 890 residues: MTAPLTTAEIRERYLYFFETKGHLRLPSHSTIAPDPTTLFTVAGMQPFKENFMGAPAVFDGQPSKRVTTAQKCVRVGDIENVGRTRRHLSLFEMMGNFSFGDYFKRDAIHWAWEFLTGPEWMGMDKDKMYVTVYKDDDEAFGYWTQDIGLPAEHIHRFDADENFWPANAPLEGPNGPCGPCSEIYYDRGENYGDDTWGDYYQTRESARFLEVWNLVFPQYDRQDLDASGQPVLKDLPFKNIDTGMGLERVASVVQDVPDFYSNDVFKPIVERVAELSGKPYEGETSVSHRVVAEHIRSVSMIVADGTAFSNTGRGYTARKIMRRAIRHGYMLGLREPQLYRLVELVVDSMGGAYPELQHNQSRVEASVRAEEEQFLKTLEGGIKRLGGLLSGMEKGSTLVGKDAFELYDTYGFPVDLTKEIAEEYGVSVDEAGYAESLEHAQEIARAGSKYGKSELFGGHQEALDGLPATQFVGYDQTSGDGQVLALLSGGERLSHLPAGSEATVVLSQTPFYGEGGGEVGDTGRLEWDGGAGIVRDTQKTKQGVFLHDVLVEQGELKEGTRVRGVVSPERAAIQRHHTATHLLHAALRAVLGGGVQQKGSRVAADQLRFDFSHGAAMSAEEIAQVETLVSRWVSANFPVSWREMPIAEAKAAGATALFGEKYGDVVRVVRVEGDVDFGGHAVSSMELCGGAHVSRTGDIGAFVIVSDENVAAGVRRIEALAGEQATAWLRGRLNASAKAAALLNTSPEGLEERVSGLQGQLKAAEKETAQARRQLAEAQMGGGGSAAQTRELGGFKVASLKLSGIEGNELRGAADKLLDQSGADLVVIASDKGLVVKATKDAVAKGAHAGQLVSKLAAAGGGKGGGRPDMAQAGITDAAGALGALDTAF.

Zn(2+) is bound by residues H578, H582, C689, and H693.

The protein belongs to the class-II aminoacyl-tRNA synthetase family. Zn(2+) serves as cofactor.

It localises to the cytoplasm. It carries out the reaction tRNA(Ala) + L-alanine + ATP = L-alanyl-tRNA(Ala) + AMP + diphosphate. In terms of biological role, catalyzes the attachment of alanine to tRNA(Ala) in a two-step reaction: alanine is first activated by ATP to form Ala-AMP and then transferred to the acceptor end of tRNA(Ala). Also edits incorrectly charged Ser-tRNA(Ala) and Gly-tRNA(Ala) via its editing domain. In Deinococcus radiodurans (strain ATCC 13939 / DSM 20539 / JCM 16871 / CCUG 27074 / LMG 4051 / NBRC 15346 / NCIMB 9279 / VKM B-1422 / R1), this protein is Alanine--tRNA ligase.